Reading from the N-terminus, the 686-residue chain is DNA ligase 1 (686 aa).

NAD(+) is bound by residues 35-39, 84-85, and Glu119; these read DFEYD and SL. The active-site N6-AMP-lysine intermediate is the Lys121. Residues Arg142, Glu177, Lys293, and Lys317 each contribute to the NAD(+) site. Zn(2+) is bound by residues Cys411, Cys414, Cys429, and Cys434. A BRCT domain is found at 602-686; the sequence is RVGEQLAGLT…LAEKGAPPLP (85 aa).

The protein belongs to the NAD-dependent DNA ligase family. LigA subfamily. The cofactor is Mg(2+). Mn(2+) serves as cofactor.

The enzyme catalyses NAD(+) + (deoxyribonucleotide)n-3'-hydroxyl + 5'-phospho-(deoxyribonucleotide)m = (deoxyribonucleotide)n+m + AMP + beta-nicotinamide D-nucleotide.. Its function is as follows. DNA ligase that catalyzes the formation of phosphodiester linkages between 5'-phosphoryl and 3'-hydroxyl groups in double-stranded DNA using NAD as a coenzyme and as the energy source for the reaction. It is essential for DNA replication and repair of damaged DNA. The chain is DNA ligase 1 from Deinococcus deserti (strain DSM 17065 / CIP 109153 / LMG 22923 / VCD115).